The primary structure comprises 381 residues: Heterogeneous nuclear rnp K-like protein 2 (381 aa).

A disordered region spans residues 1–34 (MSQFFEAATPVAIPTNNTNGGSSDAGSAATGGAP). A compositionally biased stretch (low complexity) spans 15–33 (TNNTNGGSSDAGSAATGGA). KH domains lie at 43–107 (TINH…IGDI), 156–221 (IGYV…LIEI), and 258–326 (NTRI…ESML). Positions 344-381 (LEAAEGDATVVTERSDSASFLEEKEEPQKNHDNKEEQS) are disordered. Ser-358, Ser-360, and Ser-362 each carry phosphoserine. A compositionally biased stretch (basic and acidic residues) spans 369-381 (EPQKNHDNKEEQS).

It belongs to the HEK2 family. In terms of assembly, binds RNA. Post-translationally, phosphorylated by the plasma membrane-Anchored casein kinase YCK1. Phosphorylation at its C-terminus reduces its RNA-binding capacity.

The protein resides in the cytoplasm. It is found in the P-body. The protein localises to the nucleus. It localises to the chromosome. Its subcellular location is the telomere. Its function is as follows. RNA-binding protein involved in the correct localization of transcripts in the cell. RNA localization is a widespread mechanism for achieving localized protein synthesis. Required for the asymmetric localization to the daughter cell nucleus of the ASH1 transcript, coding for a specific repressor of transcription. Overexpression inhibits translation of the ASH1 transcript. Involved in the stability of transcripts, like the MTL1 mRNA. Involved in structural and functional organization of telomeric chromatin and regulates silencing at the HMR locus. The sequence is that of Heterogeneous nuclear rnp K-like protein 2 (HEK2) from Saccharomyces cerevisiae (strain JAY291) (Baker's yeast).